Here is a 426-residue protein sequence, read N- to C-terminus: 3-phosphoshikimate 1-carboxyvinyltransferase (426 aa).

3-phosphoshikimate contacts are provided by lysine 22, serine 23, and arginine 27. Phosphoenolpyruvate is bound at residue lysine 22. Residues glycine 96 and arginine 124 each contribute to the phosphoenolpyruvate site. The 3-phosphoshikimate site is built by serine 170, serine 171, glutamine 172, serine 198, aspartate 314, asparagine 337, and lysine 341. Glutamine 172 is a phosphoenolpyruvate binding site. Aspartate 314 (proton acceptor) is an active-site residue. Positions 345, 387, and 412 each coordinate phosphoenolpyruvate.

Belongs to the EPSP synthase family. Monomer.

The protein resides in the cytoplasm. The catalysed reaction is 3-phosphoshikimate + phosphoenolpyruvate = 5-O-(1-carboxyvinyl)-3-phosphoshikimate + phosphate. Its pathway is metabolic intermediate biosynthesis; chorismate biosynthesis; chorismate from D-erythrose 4-phosphate and phosphoenolpyruvate: step 6/7. Catalyzes the transfer of the enolpyruvyl moiety of phosphoenolpyruvate (PEP) to the 5-hydroxyl of shikimate-3-phosphate (S3P) to produce enolpyruvyl shikimate-3-phosphate and inorganic phosphate. This Shewanella pealeana (strain ATCC 700345 / ANG-SQ1) protein is 3-phosphoshikimate 1-carboxyvinyltransferase.